The sequence spans 298 residues: Protoheme IX farnesyltransferase (298 aa).

9 helical membrane-spanning segments follow: residues 16-36 (VVALIVFTALVGMFLAIPDMP), 45-65 (ALGFLGIWLAASAAAAINQLL), 93-113 (VFAGVLIVISMTILVVWVNVI), 114-134 (TAVLTFASLIGYAVIYTVYLK), 141-161 (IVIGGLAGATPPMLGWAAVTG), 172-192 (SLLVLIIFIWTPPHFWALAIF), 218-238 (ILVYTVLLAIVTLAPVAVGMS), 241-261 (FYLGGAAVLNAVFLWYAWRML), and 277-297 (IVYLMALFAFLMVDHLLLPWV).

This sequence belongs to the UbiA prenyltransferase family. Protoheme IX farnesyltransferase subfamily.

Its subcellular location is the cell inner membrane. It carries out the reaction heme b + (2E,6E)-farnesyl diphosphate + H2O = Fe(II)-heme o + diphosphate. Its pathway is porphyrin-containing compound metabolism; heme O biosynthesis; heme O from protoheme: step 1/1. In terms of biological role, converts heme B (protoheme IX) to heme O by substitution of the vinyl group on carbon 2 of heme B porphyrin ring with a hydroxyethyl farnesyl side group. This Xanthomonas axonopodis pv. citri (strain 306) protein is Protoheme IX farnesyltransferase.